Here is a 427-residue protein sequence, read N- to C-terminus: V-type proton ATPase subunit C 2 (427 aa).

The tract at residues 298–320 (PLGNPARPAAGQTDRDRESEGEG) is disordered.

The protein belongs to the V-ATPase C subunit family. As to quaternary structure, V-ATPase is a heteromultimeric enzyme made up of two complexes: the ATP-hydrolytic V1 complex and the proton translocation V0 complex. The V1 complex consists of three catalytic AB heterodimers that form a heterohexamer, three peripheral stalks each consisting of EG heterodimers, one central rotor including subunits D and F, and the regulatory subunits C and H. The proton translocation complex V0 consists of the proton transport subunit a, a ring of proteolipid subunits c9c'', rotary subunit d, subunits e and f, and the accessory subunits ATP6AP1/Ac45 and ATP6AP2/PRR. In terms of tissue distribution, predominantly expressed in the lung and kidney. Isoform 1 is lung-specific while isoform 3 is a kidney-specific isoform. Isoform 1 is localized in the lamellar bodies of type II alveolar cells. Isoform 2 is strongly expressed in the cortical and medulla collecting ducts and is found in the plasma membranes of renal alpha and beta intercalated cells.

In terms of biological role, subunit of the V1 complex of vacuolar(H+)-ATPase (V-ATPase), a multisubunit enzyme composed of a peripheral complex (V1) that hydrolyzes ATP and a membrane integral complex (V0) that translocates protons. V-ATPase is responsible for acidifying and maintaining the pH of intracellular compartments and in some cell types, is targeted to the plasma membrane, where it is responsible for acidifying the extracellular environment. Subunit C is necessary for the assembly of the catalytic sector of the enzyme and is likely to have a specific function in its catalytic activity. The chain is V-type proton ATPase subunit C 2 (Atp6v1c2) from Mus musculus (Mouse).